A 102-amino-acid chain; its full sequence is Protein Tat (102 aa).

Residues 1-10 are compositionally biased toward basic and acidic residues; sequence MEPVDPRLEP. The segment at 1 to 20 is disordered; it reads MEPVDPRLEPWNHPGSQPKT. The tract at residues 1–24 is interaction with human CREBBP; the sequence is MEPVDPRLEPWNHPGSQPKTACNK. Residues 1–48 are transactivation; sequence MEPVDPRLEPWNHPGSQPKTACNKCYCKKCCYHCMCCFTKKGLGISYG. Zn(2+) contacts are provided by cysteine 22, cysteine 25, and cysteine 27. The interval 22-37 is cysteine-rich; the sequence is CNKCYCKKCCYHCMCC. The residue at position 28 (lysine 28) is an N6-acetyllysine; by host PCAF. Residues cysteine 30, histidine 33, cysteine 34, and cysteine 37 each coordinate Zn(2+). Residues 38 to 48 form a core region; the sequence is FTKKGLGISYG. The interval 47-102 is disordered; that stretch reads YGRKKRSQRRRPPKSSKDHQDPIPEQPLSRQQPGDQTGQKKQKKALEGKTEADPCD. A compositionally biased stretch (basic residues) spans 48–60; the sequence is GRKKRSQRRRPPK. The Nuclear localization signal, RNA-binding (TAR), and protein transduction signature appears at 49–57; that stretch reads RKKRSQRRR. Positions 49 to 87 are interaction with the host capping enzyme RNGTT; sequence RKKRSQRRRPPKSSKDHQDPIPEQPLSRQQPGDQTGQKK. Residues lysine 50 and lysine 51 each carry the N6-acetyllysine; by host EP300 and GCN5L2 modification. Residue arginine 52 is modified to Asymmetric dimethylarginine; by host PRMT6. Positions 74–85 are enriched in polar residues; the sequence is LSRQQPGDQTGQ. Over residues 90–102 the composition is skewed to basic and acidic residues; the sequence is KALEGKTEADPCD.

This sequence belongs to the lentiviruses Tat family. As to quaternary structure, interacts with host CCNT1. Associates with the P-TEFb complex composed at least of Tat, P-TEFb (CDK9 and CCNT1), TAR RNA, RNA Pol II. Recruits the HATs CREBBP, TAF1/TFIID, EP300, PCAF and GCN5L2. Interacts with host KAT5/Tip60; this interaction targets the latter to degradation. Interacts with the host deacetylase SIRT1. Interacts with host capping enzyme RNGTT; this interaction stimulates RNGTT. Binds to host KDR, and to the host integrins ITGAV/ITGB3 and ITGA5/ITGB1. Interacts with host KPNB1/importin beta-1 without previous binding to KPNA1/importin alpha-1. Interacts with EIF2AK2. Interacts with host nucleosome assembly protein NAP1L1; this interaction may be required for the transport of Tat within the nucleus, since the two proteins interact at the nuclear rim. Interacts with host C1QBP/SF2P32; this interaction involves lysine-acetylated Tat. Interacts with the host chemokine receptors CCR2, CCR3 and CXCR4. Interacts with host DPP4/CD26; this interaction may trigger an anti-proliferative effect. Interacts with host LDLR. Interacts with the host extracellular matrix metalloproteinase MMP1. Interacts with host PRMT6; this interaction mediates Tat's methylation. Interacts with, and is ubiquitinated by MDM2/Hdm2. Interacts with host PSMC3 and HTATIP2. Interacts with STAB1; this interaction may overcome SATB1-mediated repression of IL2 and IL2RA (interleukin) in T cells by binding to the same domain than HDAC1. Interacts (when acetylated) with human CDK13, thereby increasing HIV-1 mRNA splicing and promoting the production of the doubly spliced HIV-1 protein Nef. Interacts with host TBP; this interaction modulates the activity of transcriptional pre-initiation complex. Interacts with host RELA. Interacts with host PLSCR1; this interaction negatively regulates Tat transactivation activity by altering its subcellular distribution. Asymmetrical arginine methylation by host PRMT6 seems to diminish the transactivation capacity of Tat and affects the interaction with host CCNT1. Post-translationally, acetylation by EP300, CREBBP, GCN5L2/GCN5 and PCAF regulates the transactivation activity of Tat. EP300-mediated acetylation of Lys-50 promotes dissociation of Tat from the TAR RNA through the competitive binding to PCAF's bromodomain. In addition, the non-acetylated Tat's N-terminus can also interact with PCAF. PCAF-mediated acetylation of Lys-28 enhances Tat's binding to CCNT1. Lys-50 is deacetylated by SIRT1. In terms of processing, polyubiquitination by host MDM2 does not target Tat to degradation, but activates its transactivation function and fosters interaction with CCNT1 and TAR RNA. Phosphorylated by EIF2AK2 on serine and threonine residues adjacent to the basic region important for TAR RNA binding and function. Phosphorylation of Tat by EIF2AK2 is dependent on the prior activation of EIF2AK2 by dsRNA.

The protein localises to the host nucleus. The protein resides in the host nucleolus. Its subcellular location is the host cytoplasm. It is found in the secreted. Transcriptional activator that increases RNA Pol II processivity, thereby increasing the level of full-length viral transcripts. Recognizes a hairpin structure at the 5'-LTR of the nascent viral mRNAs referred to as the transactivation responsive RNA element (TAR) and recruits the cyclin T1-CDK9 complex (P-TEFb complex) that will in turn hyperphosphorylate the RNA polymerase II to allow efficient elongation. The CDK9 component of P-TEFb and other Tat-activated kinases hyperphosphorylate the C-terminus of RNA Pol II that becomes stabilized and much more processive. Other factors such as HTATSF1/Tat-SF1, SUPT5H/SPT5, and HTATIP2 are also important for Tat's function. Besides its effect on RNA Pol II processivity, Tat induces chromatin remodeling of proviral genes by recruiting the histone acetyltransferases (HATs) CREBBP, EP300 and PCAF to the chromatin. This also contributes to the increase in proviral transcription rate, especially when the provirus integrates in transcriptionally silent region of the host genome. To ensure maximal activation of the LTR, Tat mediates nuclear translocation of NF-kappa-B by interacting with host RELA. Through its interaction with host TBP, Tat may also modulate transcription initiation. Tat can reactivate a latently infected cell by penetrating in it and transactivating its LTR promoter. In the cytoplasm, Tat is thought to act as a translational activator of HIV-1 mRNAs. In terms of biological role, extracellular circulating Tat can be endocytosed by surrounding uninfected cells via the binding to several surface receptors such as CD26, CXCR4, heparan sulfate proteoglycans (HSPG) or LDLR. Neurons are rarely infected, but they internalize Tat via their LDLR. Through its interaction with nuclear HATs, Tat is potentially able to control the acetylation-dependent cellular gene expression. Modulates the expression of many cellular genes involved in cell survival, proliferation or in coding for cytokines or cytokine receptors. Tat plays a role in T-cell and neurons apoptosis. Tat induced neurotoxicity and apoptosis probably contribute to neuroAIDS. Circulating Tat also acts as a chemokine-like and/or growth factor-like molecule that binds to specific receptors on the surface of the cells, affecting many cellular pathways. In the vascular system, Tat binds to ITGAV/ITGB3 and ITGA5/ITGB1 integrins dimers at the surface of endothelial cells and competes with bFGF for heparin-binding sites, leading to an excess of soluble bFGF. The protein is Protein Tat of Human immunodeficiency virus type 1 group N (isolate YBF106) (HIV-1).